The following is a 204-amino-acid chain: Guanylate kinase (204 aa).

The 179-residue stretch at 3-181 (GTLYIVSASS…AVSEMSAIFT (179 aa)) folds into the Guanylate kinase-like domain. 10–17 (ASSGTGKS) contributes to the ATP binding site.

This sequence belongs to the guanylate kinase family.

The protein localises to the cytoplasm. The enzyme catalyses GMP + ATP = GDP + ADP. Functionally, essential for recycling GMP and indirectly, cGMP. The polypeptide is Guanylate kinase (Xylella fastidiosa (strain Temecula1 / ATCC 700964)).